Reading from the N-terminus, the 464-residue chain is Probable mannosyltransferase KTR4 (464 aa).

Residues 1-11 are Cytoplasmic-facing; the sequence is MRFLSKRILKP. A helical; Signal-anchor for type II membrane protein membrane pass occupies residues 12-32; it reads VLSVIILISIAVTVVLYFLTA. Residues 33–130 form a stem region region; that stretch reads NENYLQAVKD…NLVRSGDPLA (98 aa). The Lumenal segment spans residues 33–464; sequence NENYLQAVKD…SMSEEELEMY (432 aa). Residues 131 to 464 are catalytic; the sequence is GKAKGTILSL…SMSEEELEMY (334 aa). Residue Glu352 is the Nucleophile of the active site.

This sequence belongs to the glycosyltransferase 15 family.

The protein resides in the membrane. In terms of biological role, possible glycosyltransferase that transfers an alpha-D-mannosyl residue from GDP-mannose into lipid-linked oligosaccharide, forming an alpha-(1-&gt;2)-D-mannosyl-D-mannose linkage. This Saccharomyces cerevisiae (strain ATCC 204508 / S288c) (Baker's yeast) protein is Probable mannosyltransferase KTR4 (KTR4).